The sequence spans 396 residues: S-adenosylmethionine synthase (396 aa).

Glutamate 11 lines the Mg(2+) pocket. Histidine 17 provides a ligand contact to ATP. Glutamate 45 lines the K(+) pocket. L-methionine contacts are provided by glutamate 58 and glutamine 101. ATP contacts are provided by residues 169-171 (DGK), 237-240 (SGRF), aspartate 248, 254-255 (RK), alanine 271, lysine 275, and lysine 279. Aspartate 248 serves as a coordination point for L-methionine. Lysine 279 lines the L-methionine pocket.

This sequence belongs to the AdoMet synthase family. In terms of assembly, homotetramer. Mn(2+) serves as cofactor. Mg(2+) is required as a cofactor. Requires Co(2+) as cofactor. The cofactor is K(+).

Its subcellular location is the cytoplasm. The enzyme catalyses L-methionine + ATP + H2O = S-adenosyl-L-methionine + phosphate + diphosphate. It functions in the pathway amino-acid biosynthesis; S-adenosyl-L-methionine biosynthesis; S-adenosyl-L-methionine from L-methionine: step 1/1. Its function is as follows. Catalyzes the formation of S-adenosylmethionine from methionine and ATP. The reaction comprises two steps that are both catalyzed by the same enzyme: formation of S-adenosylmethionine (AdoMet) and triphosphate, and subsequent hydrolysis of the triphosphate. This Medicago sativa subsp. falcata (Sickle medic) protein is S-adenosylmethionine synthase (SAMS).